Reading from the N-terminus, the 434-residue chain is Trigger factor (434 aa).

Residues 161–246 (GDRVVIDFAG…VKGVEAPILP (86 aa)) form the PPIase FKBP-type domain.

This sequence belongs to the FKBP-type PPIase family. Tig subfamily.

The protein localises to the cytoplasm. It catalyses the reaction [protein]-peptidylproline (omega=180) = [protein]-peptidylproline (omega=0). Involved in protein export. Acts as a chaperone by maintaining the newly synthesized protein in an open conformation. Functions as a peptidyl-prolyl cis-trans isomerase. This chain is Trigger factor, found in Aromatoleum aromaticum (strain DSM 19018 / LMG 30748 / EbN1) (Azoarcus sp. (strain EbN1)).